The primary structure comprises 354 residues: Probable mannitol dehydrogenase 1 (354 aa).

Zn(2+) is bound by residues Cys43, His65, Cys96, Cys99, Cys102, Cys110, and Cys158.

This sequence belongs to the zinc-containing alcohol dehydrogenase family. It depends on Zn(2+) as a cofactor.

The enzyme catalyses D-mannitol + NAD(+) = D-mannose + NADH + H(+). Oxidizes mannitol to mannose. Provides the initial step by which translocated mannitol is committed to central metabolism and, by regulating mannitol pool size, is important in regulating salt tolerance at the cellular level. The polypeptide is Probable mannitol dehydrogenase 1 (CAD1) (Stylosanthes humilis (Townsville stylo)).